Reading from the N-terminus, the 134-residue chain is ATP synthase epsilon chain, chloroplastic (134 aa).

This sequence belongs to the ATPase epsilon chain family. As to quaternary structure, F-type ATPases have 2 components, CF(1) - the catalytic core - and CF(0) - the membrane proton channel. CF(1) has five subunits: alpha(3), beta(3), gamma(1), delta(1), epsilon(1). CF(0) has three main subunits: a, b and c.

It localises to the plastid. Its subcellular location is the chloroplast thylakoid membrane. Produces ATP from ADP in the presence of a proton gradient across the membrane. This chain is ATP synthase epsilon chain, chloroplastic, found in Drimys granadensis.